A 364-amino-acid chain; its full sequence is Aminomethyltransferase (364 aa).

Belongs to the GcvT family. The glycine cleavage system is composed of four proteins: P, T, L and H.

The catalysed reaction is N(6)-[(R)-S(8)-aminomethyldihydrolipoyl]-L-lysyl-[protein] + (6S)-5,6,7,8-tetrahydrofolate = N(6)-[(R)-dihydrolipoyl]-L-lysyl-[protein] + (6R)-5,10-methylene-5,6,7,8-tetrahydrofolate + NH4(+). In terms of biological role, the glycine cleavage system catalyzes the degradation of glycine. The sequence is that of Aminomethyltransferase from Desulforamulus reducens (strain ATCC BAA-1160 / DSM 100696 / MI-1) (Desulfotomaculum reducens).